Here is a 204-residue protein sequence, read N- to C-terminus: MATDTLTHATAHAHEHGHHDAGGTKIFGFWIYLMSDCILFSILFATYAVLVNGTAGGPTGKDIFELPFVLVETFLLLFSSITYGMAAIAMYKNNKSQVISWLALTWLFGAGFIGMEIYEFHHLIVNGMGPDRSGFLSAFFALVGTHGLHVTSGLIWMAVLMVQIARRGLTSTNRTRIMCLSLFWHFLDVVWICVFTVVYLMGAM.

Residues 1–31 (MATDTLTHATAHAHEHGHHDAGGTKIFGFWI) lie on the Cytoplasmic side of the membrane. Residues 32–50 (YLMSDCILFSILFATYAVL) form a helical membrane-spanning segment. Topologically, residues 51–66 (VNGTAGGPTGKDIFEL) are periplasmic. A helical transmembrane segment spans residues 67–85 (PFVLVETFLLLFSSITYGM). Residues 86 to 101 (AAIAMYKNNKSQVISW) are Cytoplasmic-facing. The helical transmembrane segment at 102-120 (LALTWLFGAGFIGMEIYEF) threads the bilayer. Residues 121–142 (HHLIVNGMGPDRSGFLSAFFAL) are Periplasmic-facing. Residues 143–161 (VGTHGLHVTSGLIWMAVLM) traverse the membrane as a helical segment. The Cytoplasmic segment spans residues 162–184 (VQIARRGLTSTNRTRIMCLSLFW). Residues 185-203 (HFLDVVWICVFTVVYLMGA) form a helical membrane-spanning segment. Met-204 is a topological domain (periplasmic).

The protein belongs to the cytochrome c oxidase subunit 3 family. Heterooctamer of two A chains, two B chains, two C chains and two D chains.

The protein resides in the cell inner membrane. Functionally, cytochrome bo(3) ubiquinol terminal oxidase is the component of the aerobic respiratory chain of E.coli that predominates when cells are grown at high aeration. Has proton pump activity across the membrane in addition to electron transfer, pumping 2 protons/electron. The sequence is that of Cytochrome bo(3) ubiquinol oxidase subunit 3 (cyoC) from Escherichia coli O6:H1 (strain CFT073 / ATCC 700928 / UPEC).